A 550-amino-acid chain; its full sequence is Glucose-6-phosphate isomerase 1 (550 aa).

The Proton donor role is filled by E358. Residues H389 and K513 contribute to the active site.

This sequence belongs to the GPI family.

It is found in the cytoplasm. The enzyme catalyses alpha-D-glucose 6-phosphate = beta-D-fructose 6-phosphate. It participates in carbohydrate biosynthesis; gluconeogenesis. The protein operates within carbohydrate degradation; glycolysis; D-glyceraldehyde 3-phosphate and glycerone phosphate from D-glucose: step 2/4. In terms of biological role, catalyzes the reversible isomerization of glucose-6-phosphate to fructose-6-phosphate. The protein is Glucose-6-phosphate isomerase 1 of Streptomyces coelicolor (strain ATCC BAA-471 / A3(2) / M145).